The sequence spans 221 residues: Protein-L-isoaspartate O-methyltransferase (221 aa).

The active site involves Ser64.

This sequence belongs to the methyltransferase superfamily. L-isoaspartyl/D-aspartyl protein methyltransferase family.

Its subcellular location is the cytoplasm. It catalyses the reaction [protein]-L-isoaspartate + S-adenosyl-L-methionine = [protein]-L-isoaspartate alpha-methyl ester + S-adenosyl-L-homocysteine. In terms of biological role, catalyzes the methyl esterification of L-isoaspartyl residues in peptides and proteins that result from spontaneous decomposition of normal L-aspartyl and L-asparaginyl residues. It plays a role in the repair and/or degradation of damaged proteins. The polypeptide is Protein-L-isoaspartate O-methyltransferase (Thermococcus sibiricus (strain DSM 12597 / MM 739)).